The following is a 476-amino-acid chain: Glycogen synthase (476 aa).

Lys15 provides a ligand contact to ADP-alpha-D-glucose.

This sequence belongs to the glycosyltransferase 1 family. Bacterial/plant glycogen synthase subfamily.

It carries out the reaction [(1-&gt;4)-alpha-D-glucosyl](n) + ADP-alpha-D-glucose = [(1-&gt;4)-alpha-D-glucosyl](n+1) + ADP + H(+). Its pathway is glycan biosynthesis; glycogen biosynthesis. Synthesizes alpha-1,4-glucan chains using ADP-glucose. This is Glycogen synthase from Ligilactobacillus salivarius (strain UCC118) (Lactobacillus salivarius).